The following is a 156-amino-acid chain: Glutamine--fructose-6-phosphate aminotransferase [isomerizing] (156 aa).

The SIS domain occupies 4–146 (MAHHIVPARD…VLKGTDVDQP (143 aa)). Lys-151 functions as the For Fru-6P isomerization activity in the catalytic mechanism.

As to quaternary structure, homodimer.

It localises to the cytoplasm. The enzyme catalyses D-fructose 6-phosphate + L-glutamine = D-glucosamine 6-phosphate + L-glutamate. In terms of biological role, catalyzes the first step in hexosamine metabolism, converting fructose-6P into glucosamine-6P using glutamine as a nitrogen source. This Sphingobium yanoikuyae (Sphingomonas yanoikuyae) protein is Glutamine--fructose-6-phosphate aminotransferase [isomerizing] (glmS).